We begin with the raw amino-acid sequence, 228 residues long: Probable methylthioribulose-1-phosphate dehydratase (228 aa).

Cysteine 87 is a binding site for substrate. 2 residues coordinate Zn(2+): histidine 105 and histidine 107. Glutamate 129 acts as the Proton donor/acceptor in catalysis. Position 185 (histidine 185) interacts with Zn(2+).

It belongs to the aldolase class II family. MtnB subfamily. Requires Zn(2+) as cofactor.

It is found in the cytoplasm. The catalysed reaction is 5-(methylsulfanyl)-D-ribulose 1-phosphate = 5-methylsulfanyl-2,3-dioxopentyl phosphate + H2O. The protein operates within amino-acid biosynthesis; L-methionine biosynthesis via salvage pathway; L-methionine from S-methyl-5-thio-alpha-D-ribose 1-phosphate: step 2/6. Its function is as follows. Catalyzes the dehydration of methylthioribulose-1-phosphate (MTRu-1-P) into 2,3-diketo-5-methylthiopentyl-1-phosphate (DK-MTP-1-P). This Drosophila willistoni (Fruit fly) protein is Probable methylthioribulose-1-phosphate dehydratase.